Reading from the N-terminus, the 438-residue chain is Adenosylhomocysteinase (438 aa).

Residues Thr64, Asp139, and Glu164 each coordinate substrate. An NAD(+)-binding site is contributed by 165-167 (TTT). Positions 194 and 198 each coordinate substrate. NAD(+)-binding positions include Asn199, 228–233 (GYGDVG), Glu251, Asn286, 307–309 (IGH), and Asn352.

This sequence belongs to the adenosylhomocysteinase family. It depends on NAD(+) as a cofactor.

Its subcellular location is the cytoplasm. It catalyses the reaction S-adenosyl-L-homocysteine + H2O = L-homocysteine + adenosine. The protein operates within amino-acid biosynthesis; L-homocysteine biosynthesis; L-homocysteine from S-adenosyl-L-homocysteine: step 1/1. May play a key role in the regulation of the intracellular concentration of adenosylhomocysteine. This Coxiella burnetii (strain RSA 493 / Nine Mile phase I) protein is Adenosylhomocysteinase.